A 639-amino-acid chain; its full sequence is 3-oxocholoyl-CoA 4-desaturase (639 aa).

Q101 provides a ligand contact to FMN. H155–H158 is a binding site for substrate. Y160 acts as the Proton donor in catalysis. Residues R208, R286, and G308–R309 each bind FMN. C332 and C335 together coordinate [4Fe-4S] cluster. Position 337 (Q337) interacts with FAD. [4Fe-4S] cluster-binding residues include C339 and C353. Residues A383, E402, Q410, K420, and V447 each coordinate FAD.

In the N-terminal section; belongs to the NADH:flavin oxidoreductase/NADH oxidase family. FMN serves as cofactor. The cofactor is FAD. It depends on [4Fe-4S] cluster as a cofactor.

It carries out the reaction 7alpha,12alpha-dihydroxy-3-oxochol-24-oyl-CoA + NAD(+) = 7alpha,12alpha-dihydroxy-3-oxochol-4-en-24-oyl-CoA + NADH + H(+). The catalysed reaction is 7alpha-hydroxy-3-oxochol-24-oyl-CoA + NAD(+) = 7alpha-hydroxy-3-oxochol-4-en-24-oyl-CoA + NADH + H(+). It functions in the pathway lipid metabolism; bile acid degradation. Functionally, stereo-specific NAD(H)-dependent 3-oxo-delta4-cholenoic acid oxidoreductase involved in bile acid 7alpha-dehydroxylation. The chain is 3-oxocholoyl-CoA 4-desaturase from Clostridium scindens (strain JCM 10418 / VPI 12708).